A 337-amino-acid chain; its full sequence is DNA-directed RNA polymerase subunit alpha (337 aa).

The tract at residues 1-233 (MIQKNWQELI…DQLSIFVNFE (233 aa)) is alpha N-terminal domain (alpha-NTD). Residues 249 to 337 (FNPALLKKVD…DLAKRYEDQY (89 aa)) form an alpha C-terminal domain (alpha-CTD) region.

The protein belongs to the RNA polymerase alpha chain family. As to quaternary structure, homodimer. The RNAP catalytic core consists of 2 alpha, 1 beta, 1 beta' and 1 omega subunit. When a sigma factor is associated with the core the holoenzyme is formed, which can initiate transcription.

It carries out the reaction RNA(n) + a ribonucleoside 5'-triphosphate = RNA(n+1) + diphosphate. DNA-dependent RNA polymerase catalyzes the transcription of DNA into RNA using the four ribonucleoside triphosphates as substrates. The sequence is that of DNA-directed RNA polymerase subunit alpha from Brucella abortus (strain S19).